Consider the following 420-residue polypeptide: ATP phosphoribosyltransferase regulatory subunit (420 aa).

It belongs to the class-II aminoacyl-tRNA synthetase family. HisZ subfamily. Heteromultimer composed of HisG and HisZ subunits.

It localises to the cytoplasm. The protein operates within amino-acid biosynthesis; L-histidine biosynthesis; L-histidine from 5-phospho-alpha-D-ribose 1-diphosphate: step 1/9. Its function is as follows. Required for the first step of histidine biosynthesis. May allow the feedback regulation of ATP phosphoribosyltransferase activity by histidine. The protein is ATP phosphoribosyltransferase regulatory subunit of Bacillus cereus (strain AH187).